An 831-amino-acid polypeptide reads, in one-letter code: Translation initiation factor IF-2 (831 aa).

The region spanning 329 to 499 (TRAPVVTVMG…LLIAEMQDLK (171 aa)) is the tr-type G domain. Residues 338-345 (GHVDHGKT) are G1. Position 338 to 345 (338 to 345 (GHVDHGKT)) interacts with GTP. The segment at 363-367 (GITQH) is G2. The tract at residues 385–388 (DTPG) is G3. GTP is bound by residues 385 to 389 (DTPGH) and 439 to 442 (NKID). The interval 439–442 (NKID) is G4. Residues 475–477 (SAL) form a G5 region.

Belongs to the TRAFAC class translation factor GTPase superfamily. Classic translation factor GTPase family. IF-2 subfamily.

Its subcellular location is the cytoplasm. In terms of biological role, one of the essential components for the initiation of protein synthesis. Protects formylmethionyl-tRNA from spontaneous hydrolysis and promotes its binding to the 30S ribosomal subunits. Also involved in the hydrolysis of GTP during the formation of the 70S ribosomal complex. This chain is Translation initiation factor IF-2, found in Rickettsia rickettsii (strain Iowa).